Here is a 293-residue protein sequence, read N- to C-terminus: Forkhead box protein N5 (293 aa).

The tract at residues 104-152 (TSPPLQLQRQLSNDYSTVEDSEDEAPTSCSDVLTDDDDSYNPWQPKHKR) is disordered. Positions 106–119 (PPLQLQRQLSNDYS) are enriched in polar residues. The fork-head DNA-binding region spans 176–273 (RPPLNYCNLI…NEMHALSDDL (98 aa)).

Its subcellular location is the nucleus. The sequence is that of Forkhead box protein N5 from Xenopus tropicalis (Western clawed frog).